The sequence spans 261 residues: Hemin import ATP-binding protein HmuV (261 aa).

The ABC transporter domain maps to 3–243; that stretch reads LQAQDLSVDR…ANLRRVYGVE (241 aa). 35-42 contributes to the ATP binding site; the sequence is GANGAGKS.

This sequence belongs to the ABC transporter superfamily. Heme (hemin) importer (TC 3.A.1.14.5) family. As to quaternary structure, the complex is composed of two ATP-binding proteins (HmuV), two transmembrane proteins (HmuU) and a solute-binding protein (HmuT).

The protein resides in the cell inner membrane. Its function is as follows. Part of the ABC transporter complex HmuTUV involved in hemin import. Responsible for energy coupling to the transport system. The sequence is that of Hemin import ATP-binding protein HmuV from Bordetella avium (strain 197N).